The sequence spans 167 residues: NAD(P)H-quinone oxidoreductase subunit I, chloroplastic (167 aa).

4Fe-4S ferredoxin-type domains are found at residues 55-84 (GRIHFEFDKCIACEVCVRVCPIDLPVVDWK) and 95-124 (LNYSIDFGICIFCGNCVEYCPTNCLSMTEE). Residues Cys-64, Cys-67, Cys-70, Cys-74, Cys-104, Cys-107, Cys-110, and Cys-114 each coordinate [4Fe-4S] cluster.

This sequence belongs to the complex I 23 kDa subunit family. NDH is composed of at least 16 different subunits, 5 of which are encoded in the nucleus. [4Fe-4S] cluster serves as cofactor.

The protein localises to the plastid. It is found in the chloroplast thylakoid membrane. The enzyme catalyses a plastoquinone + NADH + (n+1) H(+)(in) = a plastoquinol + NAD(+) + n H(+)(out). It catalyses the reaction a plastoquinone + NADPH + (n+1) H(+)(in) = a plastoquinol + NADP(+) + n H(+)(out). In terms of biological role, NDH shuttles electrons from NAD(P)H:plastoquinone, via FMN and iron-sulfur (Fe-S) centers, to quinones in the photosynthetic chain and possibly in a chloroplast respiratory chain. The immediate electron acceptor for the enzyme in this species is believed to be plastoquinone. Couples the redox reaction to proton translocation, and thus conserves the redox energy in a proton gradient. This Atropa belladonna (Belladonna) protein is NAD(P)H-quinone oxidoreductase subunit I, chloroplastic.